The following is a 362-amino-acid chain: Mortality factor 4-like protein 1 (362 aa).

The Tudor-knot domain occupies 12–51 (QEGERVLCFHGPLLYEAKCVKVAIKDKQVKYFIHYSGWNK). The segment at 26–62 (YEAKCVKVAIKDKQVKYFIHYSGWNKKSAVRPRRSEK) is interaction with KAT8. The tract at residues 113–182 (RELQKANQEQ…RKKRARVDPT (70 aa)) is disordered. A sufficient for interaction with SIN3A region spans residues 133 to 266 (PGKKTSGLQQ…VAGIKEYFNV (134 aa)). The short motif at 135-146 (KKTSGLQQKNVE) is the Nuclear localization signal element. Residue Lys143 is modified to N6-acetyllysine. An interaction with RB1-1 region spans residues 164 to 230 (STSETPQPPR…FYLPAKKNVD (67 aa)). The tract at residues 188 to 342 (TFMNRVEVKV…FLKYLAKNSA (155 aa)) is sufficient for interaction with PHF12. An MRG domain is found at 191–362 (NRVEVKVKIP…APPEYHRKAV (172 aa)). Residues 323–344 (LALLLNYLHDFLKYLAKNSATL) form an interaction with RB1-2 region.

In terms of assembly, component of the NuA4 histone acetyltransferase complex which contains the catalytic subunit KAT5/TIP60 and the subunits EP400, TRRAP/PAF400, BRD8/SMAP, EPC1, DMAP1/DNMAP1, RUVBL1/TIP49, RUVBL2, ING3, actin, ACTL6A/BAF53A, MORF4L1/MRG15, MORF4L2/MRGX, MRGBP, YEATS4/GAS41, VPS72/YL1 and MEAF6. The NuA4 complex interacts with MYC and the adenovirus E1A protein. MORF4L1 may also participate in the formation of NuA4 related complexes which lack the KAT5/TIP60 catalytic subunit, but which include the SWI/SNF related protein SRCAP. Component of the mSin3A histone deacetylase complex, which includes SIN3A, HDAC2, ARID4B, MORF4L1, RBBP4/RbAp48, and RBBP7/RbAp46. May also interact with PHF12 and one or more as yet undefined members of the TLE (transducin-like enhancer of split) family of transcriptional repressors. Component of the SIN3B complex, which includes SIN3B, HDAC2 or HDAC1, PHF12 and MORF4L1. Interacts with RB1 and KAT8. Interacts with the N-terminus of MRFAP1. Found in a complex composed of MORF4L1, MRFAP1 and RB1. Interacts with the entire BRCA complex, which contains BRCA1, PALB2, BRCA2 and RAD51. Interacts with PALB2. Forms a complex with MSL1 and NUPR1.

The protein resides in the nucleus. In terms of biological role, component of the NuA4 histone acetyltransferase (HAT) complex which is involved in transcriptional activation of select genes principally by acetylation of nucleosomal histones H4 and H2A. This modification may both alter nucleosome - DNA interactions and promote interaction of the modified histones with other proteins which positively regulate transcription. This complex may be required for the activation of transcriptional programs associated with oncogene and proto-oncogene mediated growth induction, tumor suppressor mediated growth arrest and replicative senescence, apoptosis, and DNA repair. The NuA4 complex ATPase and helicase activities seem to be, at least in part, contributed by the association of RUVBL1 and RUVBL2 with EP400. NuA4 may also play a direct role in DNA repair when directly recruited to sites of DNA damage. As part of the SIN3B complex represses transcription and counteracts the histone acetyltransferase activity of EP300 through the recognition H3K27ac marks by PHF12 and the activity of the histone deacetylase HDAC2. SIN3B complex is recruited downstream of the constitutively active genes transcriptional start sites through interaction with histones and mitigates histone acetylation and RNA polymerase II progression within transcribed regions contributing to the regulation of transcription. Required for homologous recombination repair (HRR) and resistance to mitomycin C (MMC). Involved in the localization of PALB2, BRCA2 and RAD51, but not BRCA1, to DNA-damage foci. This chain is Mortality factor 4-like protein 1 (Morf4l1), found in Mus musculus (Mouse).